Here is a 510-residue protein sequence, read N- to C-terminus: Solute carrier family 2, facilitated glucose transporter member 2 (510 aa).

The Cytoplasmic segment spans residues 1–10; sequence MTEDKVTGTL. A helical membrane pass occupies residues 11-31; it reads VLAVFTAVLSSFQFGYDIGVI. At 32 to 96 the chain is on the extracellular side; that stretch reads NAPQQVIITH…SASLITMFWS (65 aa). N-linked (GlcNAc...) asparagine glycosylation occurs at Asn62. A helical membrane pass occupies residues 97-117; the sequence is LSVSSFAVGGMIASFFGGLLG. Residues 118–122 lie on the Cytoplasmic side of the membrane; the sequence is DKLGR. Residues 123 to 143 form a helical membrane-spanning segment; that stretch reads IKALLVANILSLVGALLMGFS. Residues 144–157 lie on the Extracellular side of the membrane; the sequence is KLGPSHILIISGRG. The helical transmembrane segment at 158–178 threads the bilayer; sequence ISGLYCGLISGLIPMYIGEIA. The Cytoplasmic portion of the chain corresponds to 179 to 191; sequence PTTLRGAIGALHQ. Gln191 is a binding site for D-glucose. A helical transmembrane segment spans residues 192–212; the sequence is LAIVTGILISQIVGLDFILGN. The Extracellular segment spans residues 213 to 215; sequence HEL. The chain crosses the membrane as a helical span at residues 216–236; that stretch reads WHILLGLSAVPAILQCLLLFF. Topologically, residues 237–301 are cytoplasmic; the sequence is CPESPRYLYI…LFTNASYRQP (65 aa). A helical transmembrane segment spans residues 302 to 322; it reads ILVALMLHAAQQFSGINGIFY. D-glucose contacts are provided by residues 312 to 313 and Asn318; that span reads QQ. The Extracellular portion of the chain corresponds to 323–336; the sequence is YSTSIFQTAGISQP. A helical membrane pass occupies residues 337 to 357; that stretch reads VYATIGVGAVNTVFTAVSVFL. A D-glucose-binding site is contributed by Asn347. The Cytoplasmic segment spans residues 358-365; that stretch reads VEKAGRRS. The helical transmembrane segment at 366–386 threads the bilayer; sequence LFLIGMSGMFVCAIFMSVGLV. The Extracellular segment spans residues 387–400; sequence LLSKFPWMNYVSMT. A helical membrane pass occupies residues 401–421; the sequence is AIFLFVSFFEIGPGPIPWFMV. 2 residues coordinate D-glucose: Glu410 and Trp418. Residues 422–431 are Cytoplasmic-facing; it reads AEFFSQGPRP. A helical membrane pass occupies residues 432-452; that stretch reads AALAIAAFSNWTGNFIIALCF. Residues 453–454 lie on the Extracellular side of the membrane; it reads QY. The helical transmembrane segment at 455 to 475 threads the bilayer; it reads IADFCGPYVFFLLLVWSWPLF. Topologically, residues 476 to 510 are cytoplasmic; the sequence is CSHFLKFQKPKENPLRKSQQSSERRGVQLKRQKLL. A disordered region spans residues 490 to 510; the sequence is LRKSQQSSERRGVQLKRQKLL.

Belongs to the major facilitator superfamily. Sugar transporter (TC 2.A.1.1) family. Glucose transporter subfamily. In terms of processing, N-glycosylated; required for stability and retention at the cell surface of pancreatic beta cells.

The protein resides in the cell membrane. It carries out the reaction D-glucose(out) = D-glucose(in). The enzyme catalyses D-fructose(out) = D-fructose(in). It catalyses the reaction L-dehydroascorbate(out) = L-dehydroascorbate(in). The catalysed reaction is D-galactose(in) = D-galactose(out). With respect to regulation, D-glucose and maltose competitively inhibit fructose transport. D-glucose, D-fructose and maltose inhibit deoxyglucose transport. Its function is as follows. Facilitative hexose transporter that mediates the transport of glucose, fructose and galactose. Likely mediates the bidirectional transfer of glucose across the plasma membrane of hepatocytes and is responsible for uptake of glucose by the beta cells; may comprise part of the glucose-sensing mechanism of the beta cell. May also participate with the Na(+)/glucose cotransporter in the transcellular transport of glucose in the small intestine and kidney. Also able to mediate the transport of dehydroascorbate. This chain is Solute carrier family 2, facilitated glucose transporter member 2, found in Bos taurus (Bovine).